The chain runs to 94 residues: Co-chaperonin GroES (94 aa).

Belongs to the GroES chaperonin family. As to quaternary structure, heptamer of 7 subunits arranged in a ring. Interacts with the chaperonin GroEL.

Its subcellular location is the cytoplasm. Together with the chaperonin GroEL, plays an essential role in assisting protein folding. The GroEL-GroES system forms a nano-cage that allows encapsulation of the non-native substrate proteins and provides a physical environment optimized to promote and accelerate protein folding. GroES binds to the apical surface of the GroEL ring, thereby capping the opening of the GroEL channel. This chain is Co-chaperonin GroES, found in Staphylococcus epidermidis (strain ATCC 35984 / DSM 28319 / BCRC 17069 / CCUG 31568 / BM 3577 / RP62A).